Here is an 84-residue protein sequence, read N- to C-terminus: Sulfur carrier protein TusA (84 aa).

Cys-21 functions as the Cysteine persulfide intermediate in the catalytic mechanism.

Belongs to the sulfur carrier protein TusA family.

It localises to the cytoplasm. Functionally, sulfur carrier protein which probably makes part of a sulfur-relay system. The sequence is that of Sulfur carrier protein TusA from Pseudomonas syringae pv. syringae (strain B728a).